The primary structure comprises 278 residues: MALKSYNPTSPGQRGLILVDKSALWKGKPVKALTEGKRKTGGRNNKGHVTSRGIAGGHKQKYRFIDFKRRKWDVPATVERLEYDPNRTAFIALVKYEDGELAYILAPQRLAVGDTIVAGKKTDVKPGNAMELAQMPVGTIVHNIEMKPGKGGQIARSAGTYAQVVGRDRGLVIVRLGSGEQRYIRGECMGTVGAVSNPDNQNTNLGKAGRNRWLGKRPLTRGVAKNPVDHPHGGGEGRTSGGRHPVTPWGKPTKGARTRHNKSTDKMIIRSRHAKKKR.

Disordered regions lie at residues 33–53 and 219–278; these read LTEG…TSRG and LTRG…KKKR. Residues 269–278 show a composition bias toward basic residues; sequence IRSRHAKKKR.

This sequence belongs to the universal ribosomal protein uL2 family. As to quaternary structure, part of the 50S ribosomal subunit. Forms a bridge to the 30S subunit in the 70S ribosome.

In terms of biological role, one of the primary rRNA binding proteins. Required for association of the 30S and 50S subunits to form the 70S ribosome, for tRNA binding and peptide bond formation. It has been suggested to have peptidyltransferase activity; this is somewhat controversial. Makes several contacts with the 16S rRNA in the 70S ribosome. In Sphingopyxis alaskensis (strain DSM 13593 / LMG 18877 / RB2256) (Sphingomonas alaskensis), this protein is Large ribosomal subunit protein uL2.